The following is a 207-amino-acid chain: ATP-dependent Clp protease proteolytic subunit 1 (207 aa).

Ser-103 acts as the Nucleophile in catalysis. His-128 is a catalytic residue.

This sequence belongs to the peptidase S14 family. In terms of assembly, fourteen ClpP subunits assemble into 2 heptameric rings which stack back to back to give a disk-like structure with a central cavity, resembling the structure of eukaryotic proteasomes.

It is found in the cytoplasm. It catalyses the reaction Hydrolysis of proteins to small peptides in the presence of ATP and magnesium. alpha-casein is the usual test substrate. In the absence of ATP, only oligopeptides shorter than five residues are hydrolyzed (such as succinyl-Leu-Tyr-|-NHMec, and Leu-Tyr-Leu-|-Tyr-Trp, in which cleavage of the -Tyr-|-Leu- and -Tyr-|-Trp bonds also occurs).. In terms of biological role, cleaves peptides in various proteins in a process that requires ATP hydrolysis. Has a chymotrypsin-like activity. Plays a major role in the degradation of misfolded proteins. In Tropheryma whipplei (strain Twist) (Whipple's bacillus), this protein is ATP-dependent Clp protease proteolytic subunit 1.